The primary structure comprises 338 residues: 1-aminocyclopropane-1-carboxylate deaminase (338 aa).

An N6-(pyridoxal phosphate)lysine modification is found at Lys-51. Catalysis depends on Ser-78, which acts as the Nucleophile.

The protein belongs to the ACC deaminase/D-cysteine desulfhydrase family. As to quaternary structure, homotrimer. Pyridoxal 5'-phosphate is required as a cofactor.

The enzyme catalyses 1-aminocyclopropane-1-carboxylate + H2O = 2-oxobutanoate + NH4(+). Functionally, catalyzes a cyclopropane ring-opening reaction, the irreversible conversion of 1-aminocyclopropane-1-carboxylate (ACC) to ammonia and alpha-ketobutyrate. Allows growth on ACC as a nitrogen source. The protein is 1-aminocyclopropane-1-carboxylate deaminase of Ralstonia nicotianae (strain ATCC BAA-1114 / GMI1000) (Ralstonia solanacearum).